Reading from the N-terminus, the 119-residue chain is Protein TusC (119 aa).

Belongs to the DsrF/TusC family. Heterohexamer, formed by a dimer of trimers. The hexameric TusBCD complex contains 2 copies each of TusB, TusC and TusD. The TusBCD complex interacts with TusE.

It localises to the cytoplasm. Its function is as follows. Part of a sulfur-relay system required for 2-thiolation of 5-methylaminomethyl-2-thiouridine (mnm(5)s(2)U) at tRNA wobble positions. The sequence is that of Protein TusC from Escherichia fergusonii (strain ATCC 35469 / DSM 13698 / CCUG 18766 / IAM 14443 / JCM 21226 / LMG 7866 / NBRC 102419 / NCTC 12128 / CDC 0568-73).